The chain runs to 575 residues: Cytochrome P450 monooxygenase opaB (575 aa).

A glycan (N-linked (GlcNAc...) asparagine) is linked at Asn-6. Residues 37–57 (FILAAILASIILLIIRNSMLS) traverse the membrane as a helical segment. Asn-83 and Asn-242 each carry an N-linked (GlcNAc...) asparagine glycan. Heme is bound at residue Cys-521.

Belongs to the cytochrome P450 family. It depends on heme as a cofactor.

The protein resides in the membrane. Its pathway is secondary metabolite biosynthesis. Functionally, cytochrome P450 monooxygenase; part of the gene cluster that mediates the biosynthesis of oxepinamides, derivatives of anthranilyl-containing tripeptides that share an oxepin ring and a fused pyrimidinone moiety. The nonribosomal peptide synthetase (NRPS) opaA assembles the quinazolinone core with D-Phe incorporation. The first adenylation domain (A1) of opaA loads and activates anthranilic acid whereas the second A domain (A2) is for activating of L-Phe, which is then converted to D-form by the E domain. The third A domain (A3) is responsible for L-Ile activation and the terminal condensation domain C3 for cyclization and releasing the NRPS product protuboxepin K. The cytochrome P450 monooxygenase opaB then catalyzes alone the oxepin ring formation to convert protuboxepin K into protuboxepin A. The flavoenzyme opaC installs subsequently one hydroxyl group at the oxepin ring, accompanied by double bond migration, to form 15-epi-oxepinamide E. The epimerase opaE changes the D-Phe residue back to L-form, leading to oxepinamide E, which is further methylated at the hydroxyl group at C-12 by the O-methyltransferase OpaF to yield oxepinamide F. The sequence is that of Cytochrome P450 monooxygenase opaB from Aspergillus ustus.